The primary structure comprises 559 residues: Palmitoyltransferase AKR1 (559 aa).

ANK repeat units follow at residues 8–38 (QGFNALHLATHSSNAMLVLYLLMAGEMPVDT), 42–71 (LGHTSLMWAAYQGDSLSVQILLKHGARVDT), and 75–104 (EGFTPLHWAVVKGNRECLSKILMAGADIKA). 3 helical membrane-spanning segments follow: residues 148–168 (LMVLFPWYIALPLAVAQFLFG), 192–212 (TAVFQSTAFWVGFVWLRYLLG), and 217–237 (LLWMNIAFFVGYTSALYFFYG). In terms of domain architecture, DHHC spans 272 to 322 (HFCVSCIAQRPLRSKHCKFCNRCVAKFDHHCPWIYNCIGAKNHRAFLIFLA). The active-site S-palmitoyl cysteine intermediate is the Cys302. 2 consecutive transmembrane segments (helical) span residues 316–336 (AFLIFLALFLSSVPIYAYLSF) and 373–393 (LAFWSLFQMTWPGLLFLVQLY).

It belongs to the DHHC palmitoyltransferase family. AKR/ZDHHC17 subfamily.

The protein resides in the early endosome membrane. The protein localises to the golgi apparatus membrane. The enzyme catalyses L-cysteinyl-[protein] + hexadecanoyl-CoA = S-hexadecanoyl-L-cysteinyl-[protein] + CoA. Functionally, palmitoyltransferase specific for casein kinase 1. This is Palmitoyltransferase AKR1 from Mortierella alpina (Oleaginous fungus).